We begin with the raw amino-acid sequence, 293 residues long: Protein translocase subunit SecF (293 aa).

6 consecutive transmembrane segments (helical) span residues 10–30, 130–150, 158–178, 185–205, 244–264, and 267–287; these read ARIFFSITAVVLIVGIVSMFA, VKSAVGAVVLSWVLMIIYITI, LAAIVALIIDVMVTLTWFSVL, SFVAALLTVVGYSVNGTIVVF, LFAVVAIFLFGGETIHNFSFA, and VGFCSGFYTSTFLAGSMWLFF.

It belongs to the SecD/SecF family. SecF subfamily. As to quaternary structure, forms a complex with SecD. Part of the essential Sec protein translocation apparatus which comprises SecA, SecYEG and auxiliary proteins SecDF. Other proteins may also be involved.

It localises to the cell membrane. In terms of biological role, part of the Sec protein translocase complex. Interacts with the SecYEG preprotein conducting channel. SecDF uses the proton motive force (PMF) to complete protein translocation after the ATP-dependent function of SecA. The polypeptide is Protein translocase subunit SecF (Acidaminococcus fermentans (strain ATCC 25085 / DSM 20731 / CCUG 9996 / CIP 106432 / VR4)).